Consider the following 372-residue polypeptide: Spermidine/putrescine import ATP-binding protein PotA (372 aa).

The region spanning 11-241 (IELRSIKKSY…PANLFVARFI (231 aa)) is the ABC transporter domain. Position 43-50 (43-50 (GPSGCGKT)) interacts with ATP.

Belongs to the ABC transporter superfamily. Spermidine/putrescine importer (TC 3.A.1.11.1) family. As to quaternary structure, the complex is composed of two ATP-binding proteins (PotA), two transmembrane proteins (PotB and PotC) and a solute-binding protein (PotD).

The protein resides in the cell inner membrane. It catalyses the reaction ATP + H2O + polyamine-[polyamine-binding protein]Side 1 = ADP + phosphate + polyamineSide 2 + [polyamine-binding protein]Side 1.. Its function is as follows. Part of the ABC transporter complex PotABCD involved in spermidine/putrescine import. Responsible for energy coupling to the transport system. In Haemophilus influenzae (strain 86-028NP), this protein is Spermidine/putrescine import ATP-binding protein PotA.